Reading from the N-terminus, the 189-residue chain is GMP synthase [glutamine-hydrolyzing] subunit A (189 aa).

Residues 1–189 (MIVILNNGGQ…CKKCGFGFEE (189 aa)) form the Glutamine amidotransferase type-1 domain. The Nucleophile role is filled by C76. Catalysis depends on residues H163 and E165.

In terms of assembly, heterodimer composed of a glutamine amidotransferase subunit (A) and a GMP-binding subunit (B).

The enzyme catalyses XMP + L-glutamine + ATP + H2O = GMP + L-glutamate + AMP + diphosphate + 2 H(+). It participates in purine metabolism; GMP biosynthesis; GMP from XMP (L-Gln route): step 1/1. Its function is as follows. Catalyzes the synthesis of GMP from XMP. The protein is GMP synthase [glutamine-hydrolyzing] subunit A of Methanococcus maripaludis (strain DSM 14266 / JCM 13030 / NBRC 101832 / S2 / LL).